Reading from the N-terminus, the 409-residue chain is Putative fatty acyl-CoA reductase 7 (409 aa).

It belongs to the fatty acyl-CoA reductase family.

The polypeptide is Putative fatty acyl-CoA reductase 7 (FAR7) (Arabidopsis thaliana (Mouse-ear cress)).